A 777-amino-acid polypeptide reads, in one-letter code: 1,4-alpha-glucan branching enzyme GlgB (777 aa).

D408 serves as the catalytic Nucleophile. Residue E461 is the Proton donor of the active site.

It belongs to the glycosyl hydrolase 13 family. GlgB subfamily. In terms of assembly, monomer.

The enzyme catalyses Transfers a segment of a (1-&gt;4)-alpha-D-glucan chain to a primary hydroxy group in a similar glucan chain.. It participates in glycan biosynthesis; glycogen biosynthesis. Catalyzes the formation of the alpha-1,6-glucosidic linkages in glycogen by scission of a 1,4-alpha-linked oligosaccharide from growing alpha-1,4-glucan chains and the subsequent attachment of the oligosaccharide to the alpha-1,6 position. This Actinobacillus pleuropneumoniae serotype 5b (strain L20) protein is 1,4-alpha-glucan branching enzyme GlgB.